Here is a 617-residue protein sequence, read N- to C-terminus: Isopropyl malate synthase gloH (617 aa).

In terms of domain architecture, Pyruvate carboxyltransferase spans 47–325 (PIWLSTDLRD…ETGLDFSDLL (279 aa)).

This sequence belongs to the alpha-IPM synthase/homocitrate synthase family. LeuA type 2 subfamily.

The enzyme catalyses 3-methyl-2-oxobutanoate + acetyl-CoA + H2O = (2S)-2-isopropylmalate + CoA + H(+). It functions in the pathway mycotoxin biosynthesis. 2-isopropylmalate synthase; part of the gene cluster that mediates the biosynthesis of pneumocandins, lipohexapeptides of the echinocandin family that prevent fungal cell wall formation by non-competitive inhibition of beta-1,3-glucan synthase. The 10,12-dimethylmyristoyl side chain is synthesized by the reducing polyketide synthase gloL/GLPKS4. The thioesterase gloN/GLHYD exclusively interacts with gloL/GLPKS4 to maintain turnover of the polyketide side chain. The 10R,12S-dimethylmyristic acid is then transferred to the first thiolation domain of the nonribosomal peptide synthetase gloA/GLNRPS4 by the acyl-AMP ligase gloD/GLligase, followed by its acylation to L-ornithine to trigger elongation of the cyclic hexapeptide. L-ornithine, 4R-hydroxyl-L-proline (generated from L-proline by the dioxygenase gloF/GLOXY2), 3S-hydroxyl-L-homotyrosine (generated by gloG/GLHtyB, gloH/GLHtyA, gloI/GLHtyC, gloJ/GLHtyD and hydroxylated at C-3 by the dioxygenase gloM/GLOXY1), 3R-hydroxyl-L-glutamine (generated from L-glutamine probably by the dioxygenase gloE/GLOXY3) and 3S-hydroxyl-L-proline (generated from L-proline by the dioxygenase gloF/GLOXY2 to yield pneumocandin B0), or 3S-hydroxyl-4S-methyl-L-proline (generated from L-leucine by the dioxygenase gloC/GLOXY4 to yield pneumocandin A0) are sequentially added to the growing chain. The last C domain of gloA/GLNRPS4 is proposed to be responsible for cyclization by condensation to form the peptide bond between L-ornithine and 3S-hydroxyl-4S-methyl-L-proline (for pneumocandin A0) or 3S-hydroxyl-L-proline (for pneumocandin B0). Finally, the subsequent C-4 hydroxylation of 3S-hydroxyl-L-homotyrosine and L-ornithine dihydroxylation at C-4 and C-5 are performed by the cytochrome P450 monooxygenases gloP/GLP450-1 and gloO/GLP450-2, respectively. The sequence is that of Isopropyl malate synthase gloH from Glarea lozoyensis (strain ATCC 20868 / MF5171).